A 414-amino-acid chain; its full sequence is Serpin A3-6 (414 aa).

The N-terminal stretch at Met-1–Cys-25 is a signal peptide. Asn-103, Asn-183, Asn-233, Asn-267, and Asn-321 each carry an N-linked (GlcNAc...) asparagine glycan.

This sequence belongs to the serpin family. As to quaternary structure, homodimer.

It is found in the cytoplasmic vesicle. Its subcellular location is the secretory vesicle. The protein resides in the chromaffin granule. The protein localises to the secreted. Serine protease inhibitor. This is Serpin A3-6 from Bos taurus (Bovine).